A 128-amino-acid chain; its full sequence is Small ribosomal subunit protein uS11 (128 aa).

Belongs to the universal ribosomal protein uS11 family. In terms of assembly, part of the 30S ribosomal subunit. Interacts with proteins S7 and S18. Binds to IF-3.

Functionally, located on the platform of the 30S subunit, it bridges several disparate RNA helices of the 16S rRNA. Forms part of the Shine-Dalgarno cleft in the 70S ribosome. The polypeptide is Small ribosomal subunit protein uS11 (Wolbachia sp. subsp. Drosophila simulans (strain wRi)).